The chain runs to 233 residues: MSACQTPLIVALDFPTREAALKLADQLDPALCRVKVGKELFTSSASGIVETLCDKGFEVFLDLKFHDIPNTTAMAVKAAAEMGVWMVNVHCSGGLRMMAACREELAKRSGPQPLLIGVTVLTSMEREDLAGIGLDVDPQEQVLRLAALAEKAGMDGLVCSALEAPALKAAHPSLQLVTPGIRPAGSAQDDQRRILTPRQALDAGSDYLVIGRPISQAADPAQALAAVVAEIRG.

Substrate contacts are provided by residues aspartate 13, lysine 35, 62–71 (DLKFHDIPNT), threonine 122, arginine 182, glutamine 191, glycine 211, and arginine 212. Lysine 64 acts as the Proton donor in catalysis.

Belongs to the OMP decarboxylase family. Type 1 subfamily. In terms of assembly, homodimer.

It carries out the reaction orotidine 5'-phosphate + H(+) = UMP + CO2. The protein operates within pyrimidine metabolism; UMP biosynthesis via de novo pathway; UMP from orotate: step 2/2. Functionally, catalyzes the decarboxylation of orotidine 5'-monophosphate (OMP) to uridine 5'-monophosphate (UMP). The polypeptide is Orotidine 5'-phosphate decarboxylase (Pseudomonas putida (strain ATCC 47054 / DSM 6125 / CFBP 8728 / NCIMB 11950 / KT2440)).